An 877-amino-acid polypeptide reads, in one-letter code: Transcriptional corepressor SEUSS (877 aa).

2 disordered regions span residues 1-42 (MVPS…VSPR) and 272-295 (LKSM…PLRP). Over residues 272–292 (LKSMPQQRPQLPQQFQQQNLP) the composition is skewed to low complexity. The dimerization stretch occupies residues 321 to 563 (PEDNNIEFWR…ETRTGPIESL (243 aa)). The Nuclear localization signal signature appears at 330-344 (RKFVAEYFAPNAKKR). Disordered stretches follow at residues 560–599 (IESL…QQQQ), 612–633 (QQTV…LMQG), and 666–753 (GRHQ…NESS). A coiled-coil region spans residues 582–618 (QQASDQLRQQQQQQQQQQQQQQQQQQQQQQQQTVSQN). Positions 590 to 599 (QQQQQQQQQQ) are enriched in low complexity. Residues 614-633 (TVSQNTNSDQSSRQVALMQG) show a composition bias toward polar residues. 2 stretches are compositionally biased toward low complexity: residues 688 to 703 (QSPS…SSQQ) and 711 to 725 (QSPT…PSQN). Residues 726-741 (GIPSVNHMGSTNSPAM) are compositionally biased toward polar residues.

Belongs to the adn1/SEU family. Forms a corepressor complex with LUG; LUG is the transcription repressor subunit and SEU the specific DNA-binding adapter. Interacts with AGL24-AP1 and SVP-AP1 dimers when complexed to SEU. Interacts with AP1/AGL7 and SEP3/AGL9. Binds to LUH. As to expression, expressed in root, leaves, seedlings, vegetative and reproductive shoot apical meristems, seeds, floral meristems and all floral organs.

It localises to the nucleus. Its subcellular location is the nucleoplasm. In terms of biological role, DNA-binding adapter subunit of the SEU-LUG transcriptional corepressor of the C class floral homeotic gene AGAMOUS during the early stages of floral meristem development. Is part of the A class cadastral complex that define the boundaries between the A and C class homeotic genes expression and function. Interacts together with APETALA2 and LEUNIG to repress AGAMOUS expression. In association with LUG, regulates petal shape through AGAMOUS-independent mechanisms. Controls cell division during petal development and enable the proper patterning of petal blade vasculature. Required for the proper elaboration of petal polarity along the adaxial/abaxial axis. May act through direct or indirect regulation of PHABULOSA and YAB1 and thus regulate cellular proliferation within the developing petal blade. In association with AINTEGUMENTA (ANT), coordinates patterning cues and cellular proliferation along the three positional axes of the developing gynoecium. Required for the development of the medial ridge and subsequent ovule initiation. This is Transcriptional corepressor SEUSS (SEU) from Arabidopsis thaliana (Mouse-ear cress).